Reading from the N-terminus, the 456-residue chain is Chaperone protein dnaJ GFA2, mitochondrial (456 aa).

The transit peptide at 1–89 (MVPSNGAKVL…RSFHGTGSSF (89 aa)) directs the protein to the mitochondrion. The region spanning 94-159 (DYYSVLGVSK…EKRDLYDQVG (66 aa)) is the J domain. The CR-type zinc finger occupies 225–303 (GCSKTVTFQT…CRGARVVRGQ (79 aa)). Zn(2+) contacts are provided by cysteine 238, cysteine 241, cysteine 255, cysteine 258, cysteine 277, cysteine 280, cysteine 291, and cysteine 294. CXXCXGXG motif repeat units follow at residues 238–245 (CNTCGGQG), 255–262 (CKACNGSG), 277–284 (CQKCGGAG), and 291–298 (CKSCRGAR).

This sequence belongs to the DnaJ family. As to expression, widely expressed.

The protein localises to the mitochondrion. Its function is as follows. Chaperone that may play a role in mitochondrial protein folding. Involved in female gametophyte development. Required for cell death of the synergid cells during fertilization process, and fusion of the polar nuclei during megagametogenesis. This Arabidopsis thaliana (Mouse-ear cress) protein is Chaperone protein dnaJ GFA2, mitochondrial.